We begin with the raw amino-acid sequence, 230 residues long: U2 small nuclear ribonucleoprotein A' (230 aa).

5 LRR repeats span residues 15–36 (SLRN…NADT), 48–69 (GDRE…GVTE), 71–92 (HYTS…PRLE), 93–114 (TLRT…KNIA), and 115–136 (KLET…ESLK). In terms of domain architecture, LRRCT spans 149–187 (NPVQHVPRYRSYMISILPSLRMLDFQRVTQKERDEAEAM).

This sequence belongs to the U2 small nuclear ribonucleoprotein A family. In terms of assembly, associated with the spliceosome.

It localises to the nucleus. Its function is as follows. Involved in pre-mRNA splicing. This chain is U2 small nuclear ribonucleoprotein A' (LEA1), found in Yarrowia lipolytica (strain CLIB 122 / E 150) (Yeast).